The chain runs to 149 residues: Large ribosomal subunit protein bL9 (149 aa).

Belongs to the bacterial ribosomal protein bL9 family.

In terms of biological role, binds to the 23S rRNA. In Buchnera aphidicola subsp. Cinara cedri (strain Cc), this protein is Large ribosomal subunit protein bL9.